The chain runs to 397 residues: Acetate kinase 2 (397 aa).

Position 10 (Asn10) interacts with Mg(2+). Lys17 contacts ATP. Arg90 contributes to the substrate binding site. Asp147 functions as the Proton donor/acceptor in the catalytic mechanism. ATP contacts are provided by residues 207–211 (HLGNG), 281–283 (DCR), and 329–333 (GIGEN). Residue Glu383 participates in Mg(2+) binding.

This sequence belongs to the acetokinase family. As to quaternary structure, homodimer. Mg(2+) is required as a cofactor. It depends on Mn(2+) as a cofactor.

It localises to the cytoplasm. The catalysed reaction is acetate + ATP = acetyl phosphate + ADP. Its pathway is metabolic intermediate biosynthesis; acetyl-CoA biosynthesis; acetyl-CoA from acetate: step 1/2. Catalyzes the formation of acetyl phosphate from acetate and ATP. Can also catalyze the reverse reaction. The chain is Acetate kinase 2 from Photobacterium profundum (strain SS9).